A 520-amino-acid chain; its full sequence is O-methyltransferase cicE (520 aa).

S-adenosyl-L-methionine is bound by residues 300 to 301, aspartate 323, 355 to 356, and arginine 371; these read GG and NF.

Belongs to the class I-like SAM-binding methyltransferase superfamily. Cation-independent O-methyltransferase family.

Its pathway is phytotoxin biosynthesis. Its function is as follows. O-methyltransferase; part of the gene cluster that mediates the biosynthesis of cichorine, a phytotoxin active against knapweed, corn, and soybeans. The first step in the pathway is performed by the non-reducing polyketide synthase pkbA that condenses one acetyl-CoA starter unit with 3 malonyl-CoA units. PkbA also catalyzes one methylation step to produce 3-methylorsellinate. The nonribosomal peptide synthase-like protein cicB, the cytochrome P450 monooxygenase cicH and the O-methyltransferase cicE are involved in the conversion of 3-methylorsellinate into nidulol. CicB converts 3-methylorsellinate to a yet unidentified intermediate, cicH may play a ring-closing role for cichorine and cicE is plausibly responsible for the methylation of one of the phenol groups. The oxidoreductase cicC acts downstream with still unidentified enzymes to further convert nidulol into cichorine. The protein is O-methyltransferase cicE of Emericella nidulans (strain FGSC A4 / ATCC 38163 / CBS 112.46 / NRRL 194 / M139) (Aspergillus nidulans).